We begin with the raw amino-acid sequence, 319 residues long: COP9 signalosome complex subunit 6 (319 aa).

The region spanning 33-166 is the MPN domain; it reads VALHPLVILN…VSVYESVIDI (134 aa).

This sequence belongs to the peptidase M67A family. CSN6 subfamily. Component of the CSN complex, probably composed of cops1, cops2, cops3, cops4, cops5, cops6, cops7, cops8 and cops9.

It localises to the cytoplasm. Its subcellular location is the nucleus. In terms of biological role, component of the COP9 signalosome complex (CSN), a complex involved in various cellular and developmental processes. The CSN complex is an essential regulator of the ubiquitin (Ubl) conjugation pathway by mediating the deneddylation of the cullin subunits of E3 ligase complexes, leading to modify the Ubl ligase activity. The polypeptide is COP9 signalosome complex subunit 6 (cops6) (Xenopus tropicalis (Western clawed frog)).